Reading from the N-terminus, the 472-residue chain is Ribosomal RNA small subunit methyltransferase F (472 aa).

S-adenosyl-L-methionine is bound by residues 123-129 (AAAPGSK), glutamate 147, aspartate 174, and aspartate 192. The active-site Nucleophile is the cysteine 245.

It belongs to the class I-like SAM-binding methyltransferase superfamily. RsmB/NOP family.

The protein resides in the cytoplasm. The enzyme catalyses cytidine(1407) in 16S rRNA + S-adenosyl-L-methionine = 5-methylcytidine(1407) in 16S rRNA + S-adenosyl-L-homocysteine + H(+). Its function is as follows. Specifically methylates the cytosine at position 1407 (m5C1407) of 16S rRNA. This Vibrio vulnificus (strain CMCP6) protein is Ribosomal RNA small subunit methyltransferase F.